The following is a 471-amino-acid chain: Putative multidrug resistance protein MdtD (471 aa).

The next 13 helical transmembrane spans lie at 12–32 (LWIVAFGFFMQSLDTTIVNTA), 49–69 (MIIVSYVLTVAVMLPASGWLA), 77–97 (IFFTAIVLFTAGSLFCAQAST), 102–124 (VMARVLQGVGGAMMVPVGRLTVM), 138–158 (FVTLPGQVGPLLGPALGGVLV), 165–185 (WIFLINIPVGIVGAIATLCLM), 195–215 (FDLSGFLLLAAGMATLTLALD), 220–240 (LGISPAWLAGLVAVGLCALLL), 263–283 (FSLGLGGSFAGRIGSGMLPFM), 286–306 (VFLQIGLGFSPFHAGLMMIPM), 329–351 (VLVASTLGLAAVSLLFMFSALAG), 393–413 (LLSMVMQLSMSIGVTIAGLLL), and 431–451 (VFLYTYLSMAAIIALPALIFS).

Belongs to the major facilitator superfamily. TCR/Tet family.

Its subcellular location is the cell inner membrane. This chain is Putative multidrug resistance protein MdtD, found in Klebsiella pneumoniae subsp. pneumoniae (strain ATCC 700721 / MGH 78578).